The primary structure comprises 461 residues: FAD-dependent monooxygenase nodY2 (461 aa).

FAD-binding residues include E48 and R136. Residue R214 is part of the active site. FAD is bound by residues D338 and G351.

Belongs to the paxM FAD-dependent monooxygenase family. It depends on FAD as a cofactor.

It participates in secondary metabolite biosynthesis. Functionally, FAD-dependent monooxygenase; part of the gene cluster that mediates the biosynthesis of the indole diterpenes nodulisporic acids (NA). Nodulisporic acid A (NAA) and its chemically modified derivatives are of particular significance because of their highly potent insecticidal activity against blood-feeding arthropods and lack of observable adverse effects on mammals, in particular the tremogenicity associated with the paspaline-derived IDTs is not observed. The geranylgeranyl diphosphate (GGPP) synthase ggs1, localized outside of the cluster, is proposed to catalyze the first step in nodulisporic acid biosynthesis via conversion of farnesyl pyrophosphate and isopentyl pyrophosphate into geranylgeranyl pyrophosphate (GGPP). Condensation of indole-3-glycerol phosphate with GGPP by the prenyl transferase nodC then forms 3-geranylgeranylindole (3-GGI). Epoxidation by the FAD-dependent monooxygenase nodM leads to a single-epoxidized-GGI that is substrate of the terpene cyclase nodB for cyclization to yield emindole SB. The terminal methyl carbon, C28, of emindole SB is then oxidized by the cytochrome P450 monooxygenase nodW to produce nodulisporic acid F (NAF), the pentacyclic core of NAA. NAF is converted to nodulisporic acid E (NAE) via prenylation. This step is probably performed by one of the indole diterpene prenyltransferases nodD1 or nodD2. Several oxidation steps performed by the FAD-linked oxidoreductase nodO and one of the cytochrome P450 monooxygenase nodR, nodX or nodZ further convert NAE to nodulisporic acid D (NAD). NAD is substrate of cytochrome P450 monooxygenase nodJ to produce the precursor of nodulisporic acid C (NAC), converted to NAC by one of the indole diterpene prenyltransferases nodD1 or nodD2. The FAD-dependent monooxygenase nodY2 then oxidizes NAC to nodulisporic acid B (NAB). Finally NAB is converted to NAA by one of the cytochrome P450 monooxygenases nodR, nodX or nodZ. The protein is FAD-dependent monooxygenase nodY2 of Hypoxylon pulicicidum.